Reading from the N-terminus, the 379-residue chain is Alkanesulfonate monooxygenase (379 aa).

Belongs to the SsuD family.

It carries out the reaction an alkanesulfonate + FMNH2 + O2 = an aldehyde + FMN + sulfite + H2O + 2 H(+). In terms of biological role, catalyzes the desulfonation of aliphatic sulfonates. This Pseudomonas syringae pv. syringae (strain B728a) protein is Alkanesulfonate monooxygenase.